The primary structure comprises 235 residues: Elongation factor Tu (235 aa).

Residues 1–125 enclose the tr-type G domain; it reads KNMITGATQM…DGDKYIPTPS (125 aa). 47–50 is a GTP binding site; that stretch reads NKQD.

The protein belongs to the TRAFAC class translation factor GTPase superfamily. Classic translation factor GTPase family. EF-Tu/EF-1A subfamily. As to quaternary structure, monomer.

Its subcellular location is the cytoplasm. The enzyme catalyses GTP + H2O = GDP + phosphate + H(+). Its function is as follows. GTP hydrolase that promotes the GTP-dependent binding of aminoacyl-tRNA to the A-site of ribosomes during protein biosynthesis. This Leptolyngbya boryana (Plectonema boryanum) protein is Elongation factor Tu (tufA).